A 258-amino-acid polypeptide reads, in one-letter code: Acyl-[acyl-carrier-protein]--UDP-N-acetylglucosamine O-acyltransferase (258 aa).

It belongs to the transferase hexapeptide repeat family. LpxA subfamily. In terms of assembly, homotrimer.

It is found in the cytoplasm. It carries out the reaction a (3R)-hydroxyacyl-[ACP] + UDP-N-acetyl-alpha-D-glucosamine = a UDP-3-O-[(3R)-3-hydroxyacyl]-N-acetyl-alpha-D-glucosamine + holo-[ACP]. Its pathway is glycolipid biosynthesis; lipid IV(A) biosynthesis; lipid IV(A) from (3R)-3-hydroxytetradecanoyl-[acyl-carrier-protein] and UDP-N-acetyl-alpha-D-glucosamine: step 1/6. Involved in the biosynthesis of lipid A, a phosphorylated glycolipid that anchors the lipopolysaccharide to the outer membrane of the cell. In Pseudomonas fluorescens (strain SBW25), this protein is Acyl-[acyl-carrier-protein]--UDP-N-acetylglucosamine O-acyltransferase.